The sequence spans 281 residues: Proline iminopeptidase PfmaB (281 aa).

Positions 23 to 267 (PLVITLHGGR…NANHSVHVEK (245 aa)) constitute an AB hydrolase-1 domain.

It belongs to the peptidase S33 family.

The catalysed reaction is Release of N-terminal proline from a peptide.. Functionally, proline iminopeptidase; part of the gene cluster that mediates the biosynthesis of dihydroxynaphthalene (DHN)-melanin, a bluish-green pigment forming a dark layer in the conidial wall that protects the conidia from UV radiations. The first step of the pathway is the production of the pentaketide 1,3,6,8-tetrahydroxynaphthalene (1,3,6,8-THN or T4HN) by the polyketide synthase PfmaE though condensation of acetyl-CoA with malonyl-CoA. T4HN is not stable and easily oxidizes into the stable form flaviolin. T4HN is also substrate of the hydroxynaphthalene reductase PfmaG to yield scytalone. The scytalone dehydratase PfmaJ then reduces scytalone to 1,3,8-THN. 1,3,8-THN is then substrate of the hydroxynaphthalene reductase PfmaI to yield vermelone. Vermelone is further converted by the multicopper oxidase PfmaD to 1,8-DHN. Finally the laccase PFICI_06862 transforms 1,8-DHN to DHN-melanin. The roles of the 5-oxoprolinase PfmaA and the proline iminopeptidase PfmaB within the cluster have not been elucidated yet. The sequence is that of Proline iminopeptidase PfmaB from Pestalotiopsis fici (strain W106-1 / CGMCC3.15140).